A 202-amino-acid polypeptide reads, in one-letter code: Glycerol-3-phosphate acyltransferase (202 aa).

Transmembrane regions (helical) follow at residues 2–22 (MIVV…GYVI), 54–74 (FIVT…PIWF), 85–105 (FFTH…YPIY), 120–140 (VVLG…FGVL), 141–161 (YIFK…VIGS), and 162–182 (LIIQ…ILIV).

Belongs to the PlsY family. Probably interacts with PlsX.

The protein localises to the cell membrane. It carries out the reaction an acyl phosphate + sn-glycerol 3-phosphate = a 1-acyl-sn-glycero-3-phosphate + phosphate. Its pathway is lipid metabolism; phospholipid metabolism. Its function is as follows. Catalyzes the transfer of an acyl group from acyl-phosphate (acyl-PO(4)) to glycerol-3-phosphate (G3P) to form lysophosphatidic acid (LPA). This enzyme utilizes acyl-phosphate as fatty acyl donor, but not acyl-CoA or acyl-ACP. The protein is Glycerol-3-phosphate acyltransferase of Staphylococcus haemolyticus (strain JCSC1435).